Reading from the N-terminus, the 247-residue chain is Adenylyl-sulfate kinase (247 aa).

The disordered stretch occupies residues 1 to 24; sequence MSQSNSDDSASSSTQQAGDGQDDV. ATP is bound at residue 55–62; the sequence is GLSGCGKS. Serine 146 (phosphoserine intermediate) is an active-site residue.

The protein belongs to the APS kinase family.

The catalysed reaction is adenosine 5'-phosphosulfate + ATP = 3'-phosphoadenylyl sulfate + ADP + H(+). The protein operates within sulfur metabolism; hydrogen sulfide biosynthesis; sulfite from sulfate: step 2/3. In terms of biological role, catalyzes the synthesis of activated sulfate. In Rhodopirellula baltica (strain DSM 10527 / NCIMB 13988 / SH1), this protein is Adenylyl-sulfate kinase.